The primary structure comprises 157 residues: Protein BeeE (157 aa).

Belongs to the phage portal family.

This Escherichia coli (strain K12) protein is Protein BeeE (beeE).